Consider the following 21-residue polypeptide: Major outer membrane protein P44 (21 aa).

Monomer.

Its subcellular location is the cell outer membrane. This is Major outer membrane protein P44 from Mannheimia haemolytica (Pasteurella haemolytica).